Reading from the N-terminus, the 383-residue chain is Cytochrome b (383 aa).

The next 4 helical transmembrane spans lie at 35–55, 79–100, 115–135, and 180–200; these read FGSILGIFLMIQIISGFILSM, WLFRLIHMNGASFYFLMMYIHI, WGIGIMILLMSMAAAFMGYVL, and FFSLHFILPLLILFMVILHLF. The heme b site is built by His-85 and His-99. The heme b site is built by His-184 and His-198. His-203 contacts a ubiquinone. Helical transmembrane passes span 228–248, 290–310, 321–341, and 348–368; these read IKDLLGFYIILFIFMFINFQF, LGGVIGLVMSILILYIMIFYN, LNKIYYWMFINNFILLTWLGK, and FTNINMLFTTTYFLYFFLNFY.

Belongs to the cytochrome b family. The main subunits of complex b-c1 are: cytochrome b, cytochrome c1 and the Rieske protein. The cofactor is heme b.

Its subcellular location is the mitochondrion inner membrane. In terms of biological role, component of the ubiquinol-cytochrome c reductase complex (complex III or cytochrome b-c1 complex) that is part of the mitochondrial respiratory chain. The b-c1 complex mediates electron transfer from ubiquinol to cytochrome c. Contributes to the generation of a proton gradient across the mitochondrial membrane that is then used for ATP synthesis. This Apis mellifera ligustica (Common honeybee) protein is Cytochrome b (MT-CYB).